The primary structure comprises 148 residues: SsrA-binding protein (148 aa).

Over residues E129–R142 the composition is skewed to basic and acidic residues. The segment at E129 to T148 is disordered.

The protein belongs to the SmpB family.

It localises to the cytoplasm. In terms of biological role, required for rescue of stalled ribosomes mediated by trans-translation. Binds to transfer-messenger RNA (tmRNA), required for stable association of tmRNA with ribosomes. tmRNA and SmpB together mimic tRNA shape, replacing the anticodon stem-loop with SmpB. tmRNA is encoded by the ssrA gene; the 2 termini fold to resemble tRNA(Ala) and it encodes a 'tag peptide', a short internal open reading frame. During trans-translation Ala-aminoacylated tmRNA acts like a tRNA, entering the A-site of stalled ribosomes, displacing the stalled mRNA. The ribosome then switches to translate the ORF on the tmRNA; the nascent peptide is terminated with the 'tag peptide' encoded by the tmRNA and targeted for degradation. The ribosome is freed to recommence translation, which seems to be the essential function of trans-translation. The chain is SsrA-binding protein from Burkholderia orbicola (strain AU 1054).